Consider the following 317-residue polypeptide: Ubiquinone biosynthesis protein COQ9-A, mitochondrial (317 aa).

The N-terminal 46 residues, 1–46 (MAASVTRVLKGAGGRQLLLMVARRRPVLMQPFLLMPRKFWVSSALR), are a transit peptide targeting the mitochondrion. The tract at residues 50-97 (QRQPPFSASSTHAETQGHAEEQYQQKQPPPRYTDQAGEESEGYESEEQ) is disordered. Over residues 53–63 (PPFSASSTHAE) the composition is skewed to polar residues. Positions 85 to 96 (AGEESEGYESEE) are enriched in acidic residues. Arginine 243 contacts a 1,2-diacylglycero-3-phosphoethanolamine.

Belongs to the COQ9 family. As to quaternary structure, homodimer. Heterodimer; two heterodimers of COQ7:COQ9 come together on the same side of the lipid pseudo-bilayer and form a curved tetramer with a hydrophobic surface suitable for membrane interaction. These two tetramers assemble into a soluble octamer with a pseudo-bilayer of lipids captured within. Interacts with COQ7; this interaction allows ubiquinone (CoQ) isoprene intermediates presentation to COQ7 and facilitates the COQ7-mediated hydroxylase step.

The protein localises to the mitochondrion. Its pathway is cofactor biosynthesis; ubiquinone biosynthesis. Its function is as follows. Membrane-associated protein that warps the membrane surface to access and bind aromatic isoprenes with high specificity, including ubiquinone (CoQ) isoprene intermediates and presents them directly to COQ7, therefore facilitating the COQ7-mediated hydroxylase step. Participates in the biosynthesis of coenzyme Q, also named ubiquinone, an essential lipid-soluble electron transporter for aerobic cellular respiration. The polypeptide is Ubiquinone biosynthesis protein COQ9-A, mitochondrial (coq9-a) (Xenopus laevis (African clawed frog)).